Reading from the N-terminus, the 194-residue chain is Holliday junction branch migration complex subunit RuvA (194 aa).

Positions 1–64 (MISRLTGKLV…EDAHLLFGFA (64 aa)) are domain I. The interval 65–143 (TAEERKTFRQ…AHAVTDGLFA (79 aa)) is domain II. Residues 144–147 (AAPA) form a flexible linker region. The segment at 147–194 (AADETEDIVGTLLALGYSEREAKAAVKGVPKGTDVGEGVRLALKNLLK) is domain III.

It belongs to the RuvA family. As to quaternary structure, homotetramer. Forms an RuvA(8)-RuvB(12)-Holliday junction (HJ) complex. HJ DNA is sandwiched between 2 RuvA tetramers; dsDNA enters through RuvA and exits via RuvB. An RuvB hexamer assembles on each DNA strand where it exits the tetramer. Each RuvB hexamer is contacted by two RuvA subunits (via domain III) on 2 adjacent RuvB subunits; this complex drives branch migration. In the full resolvosome a probable DNA-RuvA(4)-RuvB(12)-RuvC(2) complex forms which resolves the HJ.

It localises to the cytoplasm. The RuvA-RuvB-RuvC complex processes Holliday junction (HJ) DNA during genetic recombination and DNA repair, while the RuvA-RuvB complex plays an important role in the rescue of blocked DNA replication forks via replication fork reversal (RFR). RuvA specifically binds to HJ cruciform DNA, conferring on it an open structure. The RuvB hexamer acts as an ATP-dependent pump, pulling dsDNA into and through the RuvAB complex. HJ branch migration allows RuvC to scan DNA until it finds its consensus sequence, where it cleaves and resolves the cruciform DNA. The polypeptide is Holliday junction branch migration complex subunit RuvA (Neisseria meningitidis serogroup C / serotype 2a (strain ATCC 700532 / DSM 15464 / FAM18)).